Here is a 348-residue protein sequence, read N- to C-terminus: Dihydroorotase (348 aa).

The Zn(2+) site is built by His-17 and His-19. Residues 19–21 (HLR) and Asn-45 contribute to the substrate site. Residues Lys-103, His-140, and His-178 each coordinate Zn(2+). Position 103 is an N6-carboxylysine (Lys-103). His-140 contributes to the substrate binding site. Leu-223 is a binding site for substrate. A Zn(2+)-binding site is contributed by Asp-251. The active site involves Asp-251. 2 residues coordinate substrate: His-255 and Ala-267.

This sequence belongs to the metallo-dependent hydrolases superfamily. DHOase family. Class II DHOase subfamily. Homodimer. Zn(2+) serves as cofactor.

The catalysed reaction is (S)-dihydroorotate + H2O = N-carbamoyl-L-aspartate + H(+). It functions in the pathway pyrimidine metabolism; UMP biosynthesis via de novo pathway; (S)-dihydroorotate from bicarbonate: step 3/3. Catalyzes the reversible cyclization of carbamoyl aspartate to dihydroorotate. This chain is Dihydroorotase, found in Shigella boydii serotype 4 (strain Sb227).